The chain runs to 319 residues: Thioredoxin reductase (319 aa).

FAD contacts are provided by residues 11–14, 40–41, Q45, N54, V87, C145, D288, and 295–297; these read SGPA, VA, and RQA. A disulfide bridge links C142 with C145.

This sequence belongs to the class-II pyridine nucleotide-disulfide oxidoreductase family. In terms of assembly, homodimer. FAD is required as a cofactor.

It is found in the cytoplasm. It catalyses the reaction [thioredoxin]-dithiol + NADP(+) = [thioredoxin]-disulfide + NADPH + H(+). The chain is Thioredoxin reductase (TRR1) from Eremothecium gossypii (strain ATCC 10895 / CBS 109.51 / FGSC 9923 / NRRL Y-1056) (Yeast).